The sequence spans 957 residues: Glycine dehydrogenase (decarboxylating) (957 aa).

K708 is modified (N6-(pyridoxal phosphate)lysine).

This sequence belongs to the GcvP family. In terms of assembly, the glycine cleavage system is composed of four proteins: P, T, L and H. Pyridoxal 5'-phosphate serves as cofactor.

The catalysed reaction is N(6)-[(R)-lipoyl]-L-lysyl-[glycine-cleavage complex H protein] + glycine + H(+) = N(6)-[(R)-S(8)-aminomethyldihydrolipoyl]-L-lysyl-[glycine-cleavage complex H protein] + CO2. Its function is as follows. The glycine cleavage system catalyzes the degradation of glycine. The P protein binds the alpha-amino group of glycine through its pyridoxal phosphate cofactor; CO(2) is released and the remaining methylamine moiety is then transferred to the lipoamide cofactor of the H protein. This is Glycine dehydrogenase (decarboxylating) from Klebsiella pneumoniae (strain 342).